A 447-amino-acid chain; its full sequence is Asparagine--tRNA ligase (447 aa).

It belongs to the class-II aminoacyl-tRNA synthetase family. As to quaternary structure, homodimer.

Its subcellular location is the cytoplasm. It catalyses the reaction tRNA(Asn) + L-asparagine + ATP = L-asparaginyl-tRNA(Asn) + AMP + diphosphate + H(+). This chain is Asparagine--tRNA ligase, found in Lactococcus lactis subsp. cremoris (strain SK11).